The following is a 340-amino-acid chain: 4-hydroxy-3-methylbut-2-enyl diphosphate reductase (340 aa).

C19 provides a ligand contact to [4Fe-4S] cluster. 2 residues coordinate (2E)-4-hydroxy-3-methylbut-2-enyl diphosphate: H50 and H90. Residues H50 and H90 each coordinate dimethylallyl diphosphate. Isopentenyl diphosphate contacts are provided by H50 and H90. Residue C112 coordinates [4Fe-4S] cluster. H141 lines the (2E)-4-hydroxy-3-methylbut-2-enyl diphosphate pocket. H141 provides a ligand contact to dimethylallyl diphosphate. Isopentenyl diphosphate is bound at residue H141. The Proton donor role is filled by E143. A (2E)-4-hydroxy-3-methylbut-2-enyl diphosphate-binding site is contributed by T190. C220 is a binding site for [4Fe-4S] cluster. (2E)-4-hydroxy-3-methylbut-2-enyl diphosphate contacts are provided by S248, S249, N250, and S292. The dimethylallyl diphosphate site is built by S248, S249, N250, and S292. The isopentenyl diphosphate site is built by S248, S249, N250, and S292.

The protein belongs to the IspH family. The cofactor is [4Fe-4S] cluster.

The enzyme catalyses isopentenyl diphosphate + 2 oxidized [2Fe-2S]-[ferredoxin] + H2O = (2E)-4-hydroxy-3-methylbut-2-enyl diphosphate + 2 reduced [2Fe-2S]-[ferredoxin] + 2 H(+). The catalysed reaction is dimethylallyl diphosphate + 2 oxidized [2Fe-2S]-[ferredoxin] + H2O = (2E)-4-hydroxy-3-methylbut-2-enyl diphosphate + 2 reduced [2Fe-2S]-[ferredoxin] + 2 H(+). It participates in isoprenoid biosynthesis; dimethylallyl diphosphate biosynthesis; dimethylallyl diphosphate from (2E)-4-hydroxy-3-methylbutenyl diphosphate: step 1/1. It functions in the pathway isoprenoid biosynthesis; isopentenyl diphosphate biosynthesis via DXP pathway; isopentenyl diphosphate from 1-deoxy-D-xylulose 5-phosphate: step 6/6. Catalyzes the conversion of 1-hydroxy-2-methyl-2-(E)-butenyl 4-diphosphate (HMBPP) into a mixture of isopentenyl diphosphate (IPP) and dimethylallyl diphosphate (DMAPP). Acts in the terminal step of the DOXP/MEP pathway for isoprenoid precursor biosynthesis. This chain is 4-hydroxy-3-methylbut-2-enyl diphosphate reductase, found in Thermus thermophilus (strain ATCC BAA-163 / DSM 7039 / HB27).